The following is a 484-amino-acid chain: tRNA sulfurtransferase (484 aa).

The THUMP domain maps to 63-167; that stretch reads QGIRDRLSCM…DQRLFVVHDQ (105 aa). Residues 185–186, K267, G289, and Q298 contribute to the ATP site; that span reads LM. C346 and C457 are disulfide-bonded. The region spanning 405–483 is the Rhodanese domain; that stretch reads ALAGQVIIDI…GHANVRVYRP (79 aa). C457 (cysteine persulfide intermediate) is an active-site residue.

This sequence belongs to the ThiI family.

It is found in the cytoplasm. It catalyses the reaction [ThiI sulfur-carrier protein]-S-sulfanyl-L-cysteine + a uridine in tRNA + 2 reduced [2Fe-2S]-[ferredoxin] + ATP + H(+) = [ThiI sulfur-carrier protein]-L-cysteine + a 4-thiouridine in tRNA + 2 oxidized [2Fe-2S]-[ferredoxin] + AMP + diphosphate. The catalysed reaction is [ThiS sulfur-carrier protein]-C-terminal Gly-Gly-AMP + S-sulfanyl-L-cysteinyl-[cysteine desulfurase] + AH2 = [ThiS sulfur-carrier protein]-C-terminal-Gly-aminoethanethioate + L-cysteinyl-[cysteine desulfurase] + A + AMP + 2 H(+). The protein operates within cofactor biosynthesis; thiamine diphosphate biosynthesis. Functionally, catalyzes the ATP-dependent transfer of a sulfur to tRNA to produce 4-thiouridine in position 8 of tRNAs, which functions as a near-UV photosensor. Also catalyzes the transfer of sulfur to the sulfur carrier protein ThiS, forming ThiS-thiocarboxylate. This is a step in the synthesis of thiazole, in the thiamine biosynthesis pathway. The sulfur is donated as persulfide by IscS. The protein is tRNA sulfurtransferase of Pseudomonas syringae pv. tomato (strain ATCC BAA-871 / DC3000).